The sequence spans 129 residues: RutC family protein PM1466 (129 aa).

This sequence belongs to the RutC family.

The chain is RutC family protein PM1466 from Pasteurella multocida (strain Pm70).